The primary structure comprises 604 residues: Proline--tRNA ligase (604 aa).

This sequence belongs to the class-II aminoacyl-tRNA synthetase family. ProS type 1 subfamily. In terms of assembly, homodimer.

It is found in the cytoplasm. It catalyses the reaction tRNA(Pro) + L-proline + ATP = L-prolyl-tRNA(Pro) + AMP + diphosphate. Catalyzes the attachment of proline to tRNA(Pro) in a two-step reaction: proline is first activated by ATP to form Pro-AMP and then transferred to the acceptor end of tRNA(Pro). As ProRS can inadvertently accommodate and process non-cognate amino acids such as alanine and cysteine, to avoid such errors it has two additional distinct editing activities against alanine. One activity is designated as 'pretransfer' editing and involves the tRNA(Pro)-independent hydrolysis of activated Ala-AMP. The other activity is designated 'posttransfer' editing and involves deacylation of mischarged Ala-tRNA(Pro). The misacylated Cys-tRNA(Pro) is not edited by ProRS. This is Proline--tRNA ligase from Trichormus variabilis (strain ATCC 29413 / PCC 7937) (Anabaena variabilis).